A 683-amino-acid chain; its full sequence is Patellin-2 (683 aa).

A disordered region spans residues 1–23 (MAQEEIQKPTASVPVVKEETPAP). A2 is modified (N-acetylalanine). S79 bears the Phosphoserine mark. The stretch at 86–163 (LASELQEAEK…ETKEEEKSAA (78 aa)) forms a coiled coil. Positions 111–279 (KREFTAPPPP…KKEEKATAST (169 aa)) are disordered. Residues 124 to 161 (VKEEKVEEKKTEETEEKKEEVKTEEKSLEAETKEEEKS) are compositionally biased toward basic and acidic residues. The span at 232–243 (PVETTPAAPVTT) shows a compositional bias: low complexity. Positions 244-275 (ETKEEEKAAPVTTETKEEEKAAPGETKKEEKA) are enriched in basic and acidic residues. K394 is covalently cross-linked (Glycyl lysine isopeptide (Lys-Gly) (interchain with G-Cter in ubiquitin)). A CRAL-TRIO domain is found at 404–576 (EDLEGSEFEK…KYGGLSKDSP (173 aa)). The 102-residue stretch at 580–681 (EDGVTEAVVK…KKKVLYRSKT (102 aa)) folds into the GOLD domain.

The protein belongs to the patellin family. Interacts with the deubiquitinating enzyme AMSH3.

It is found in the membrane. The protein localises to the cytoplasm. Functionally, carrier protein that may be involved in membrane-trafficking events associated with cell plate formation during cytokinesis. Binds to some hydrophobic molecules such as phosphoinositides and promotes their transfer between the different cellular sites. This is Patellin-2 (PATL2) from Arabidopsis thaliana (Mouse-ear cress).